A 530-amino-acid polypeptide reads, in one-letter code: Putative sulfate transporter YvdB (530 aa).

10 helical membrane passes run 19 to 39 (LIAG…FAIA), 41 to 61 (GVEP…ISLF), 68 to 88 (IGGP…QYGL), 91 to 111 (LLIA…FKLG), 121 to 141 (VIVG…IANF), 164 to 184 (LGTF…ILLV), 192 to 212 (VPGA…FFPD), 241 to 261 (MVML…ESIL), 313 to 333 (AVSP…LLVF), and 384 to 404 (VLFD…VFFI). An STAS domain is found at 420–530 (PVLAKREDPS…FFDHHDEITG (111 aa)).

It belongs to the SLC26A/SulP transporter (TC 2.A.53) family.

The protein resides in the cell membrane. This chain is Putative sulfate transporter YvdB (yvdB), found in Bacillus subtilis (strain 168).